Consider the following 677-residue polypeptide: Gamma-tubulin complex subunit mod21 (677 aa).

As to quaternary structure, component of the gamma-tubulin complex composed of at least alp4, alp6, alp16, ghf1, gtb1 and mod21.

Its subcellular location is the cytoplasm. It is found in the cytoskeleton. The protein localises to the microtubule organizing center. The protein resides in the spindle pole body. Component of the gamma-tubulin complex that is required for the regulation of both interphase microtubule organization and nucleation, and mitotic bipolar spindles. Required for correct septation. This is Gamma-tubulin complex subunit mod21 from Schizosaccharomyces pombe (strain 972 / ATCC 24843) (Fission yeast).